The sequence spans 190 residues: Recombination protein RecR (190 aa).

The C4-type zinc finger occupies 58–73 (CGQCGALSENELCEIC). One can recognise a Toprim domain in the interval 81 to 167 (NILCIVESPK…TFSKIAQGIP (87 aa)).

This sequence belongs to the RecR family.

Its function is as follows. May play a role in DNA repair. It seems to be involved in an RecBC-independent recombinational process of DNA repair. It may act with RecF and RecO. This is Recombination protein RecR from Campylobacter jejuni subsp. jejuni serotype O:6 (strain 81116 / NCTC 11828).